The sequence spans 367 residues: Glutamate 5-kinase (367 aa).

K10 serves as a coordination point for ATP. 3 residues coordinate substrate: S50, D137, and N149. ATP-binding positions include 169–170 and 211–217; these read TD and TGGMGTK. The region spanning 275 to 353 is the PUA domain; it reads AGEITVDDGA…QEISEILGYE (79 aa).

This sequence belongs to the glutamate 5-kinase family.

It localises to the cytoplasm. The catalysed reaction is L-glutamate + ATP = L-glutamyl 5-phosphate + ADP. It participates in amino-acid biosynthesis; L-proline biosynthesis; L-glutamate 5-semialdehyde from L-glutamate: step 1/2. In terms of biological role, catalyzes the transfer of a phosphate group to glutamate to form L-glutamate 5-phosphate. This chain is Glutamate 5-kinase, found in Serratia proteamaculans (strain 568).